Here is a 241-residue protein sequence, read N- to C-terminus: 3-deoxy-D-manno-octulosonic acid kinase (241 aa).

The active site involves Asp171.

The protein belongs to the protein kinase superfamily. KdkA/RfaP family.

It localises to the cell inner membrane. It catalyses the reaction an alpha-Kdo-(2-&gt;6)-lipid IVA + ATP = a 4-O-phospho-alpha-Kdo-(2-&gt;6)-lipid IVA + ADP + H(+). It functions in the pathway bacterial outer membrane biogenesis; LPS core biosynthesis. Functionally, catalyzes the ATP-dependent phosphorylation of the 3-deoxy-D-manno-octulosonic acid (Kdo) residue in Kdo-lipid IV(A) at the 4-OH position. The protein is 3-deoxy-D-manno-octulosonic acid kinase of Haemophilus influenzae (strain PittEE).